Consider the following 263-residue polypeptide: Large ribosomal subunit protein uL10m (263 aa).

The N-terminal 29 residues, 1 to 29, are a transit peptide targeting the mitochondrion; sequence MPFSVEVEVFFLLVEDKLGWLPTLQPVRH. Residues 241-263 are disordered; it reads QHEGDCATSTEGKPHPPDPAPDS.

The protein belongs to the universal ribosomal protein uL10 family. In terms of assembly, component of the mitochondrial ribosome large subunit (39S) which comprises a 16S rRNA and about 50 distinct proteins.

The protein resides in the mitochondrion. This Rattus norvegicus (Rat) protein is Large ribosomal subunit protein uL10m (Mrpl10).